Here is a 549-residue protein sequence, read N- to C-terminus: Cobalt-dependent inorganic pyrophosphatase (549 aa).

2 consecutive CBS domains span residues 74–130 and 252–310; these read EMDK…IWDS and MTKD…VIQV. Residues Lys-100, 116–119, Thr-253, Val-258, and 278–280 contribute to the AMP site; these read STSN and YSN.

This sequence belongs to the PPase family. Homodimer. It depends on Co(2+) as a cofactor. Mn(2+) serves as cofactor. Requires Mg(2+) as cofactor.

It carries out the reaction diphosphate + H2O = 2 phosphate + H(+). Inhibited by AMP and ADP with 25% and 35% of activity remaining, respectively, at saturating conditions. Activated 5-fold by diadenosine polyphosphates(Ap[n]A) with n&gt;2 (Ap3A, Ap4A, Ap5A, Ap6A) at saturating conditions. This chain is Cobalt-dependent inorganic pyrophosphatase, found in Clostridium perfringens (strain 13 / Type A).